An 85-amino-acid polypeptide reads, in one-letter code: Large ribosomal subunit protein bL27 (85 aa).

The disordered stretch occupies residues 1 to 21 (MAHKKAGGSTRNGRDSEGKRL).

Belongs to the bacterial ribosomal protein bL27 family.

The sequence is that of Large ribosomal subunit protein bL27 from Hamiltonella defensa subsp. Acyrthosiphon pisum (strain 5AT).